Here is a 319-residue protein sequence, read N- to C-terminus: tRNA-cytidine(32) 2-sulfurtransferase (319 aa).

Residues 43 to 48 (SGGKDS) carry the PP-loop motif motif. C118, C121, and C209 together coordinate [4Fe-4S] cluster. The disordered stretch occupies residues 272 to 297 (DLAFDSEKMPERFSDGSEEDESEIKI). Positions 276-286 (DSEKMPERFSD) are enriched in basic and acidic residues.

The protein belongs to the TtcA family. As to quaternary structure, homodimer. The cofactor is Mg(2+). Requires [4Fe-4S] cluster as cofactor.

The protein resides in the cytoplasm. It carries out the reaction cytidine(32) in tRNA + S-sulfanyl-L-cysteinyl-[cysteine desulfurase] + AH2 + ATP = 2-thiocytidine(32) in tRNA + L-cysteinyl-[cysteine desulfurase] + A + AMP + diphosphate + H(+). The protein operates within tRNA modification. Functionally, catalyzes the ATP-dependent 2-thiolation of cytidine in position 32 of tRNA, to form 2-thiocytidine (s(2)C32). The sulfur atoms are provided by the cysteine/cysteine desulfurase (IscS) system. The protein is tRNA-cytidine(32) 2-sulfurtransferase of Neisseria gonorrhoeae (strain ATCC 700825 / FA 1090).